The primary structure comprises 444 residues: L-cysteine:1D-myo-inositol 2-amino-2-deoxy-alpha-D-glucopyranoside ligase (444 aa).

Residue Cys66 coordinates Zn(2+). Residues 66 to 69, Thr81, and 104 to 106 contribute to the L-cysteinyl-5'-AMP site; these read CGIT and NVT. A 'HIGH' region motif is present at residues 68-78; it reads ITPYDATHLGH. The 'ERGGDP' region motif lies at 206–211; that stretch reads EHGGDP. Trp246 contacts L-cysteinyl-5'-AMP. Zn(2+) is bound at residue Cys250. 268–270 is an L-cysteinyl-5'-AMP binding site; the sequence is GSD. Residue His275 participates in Zn(2+) binding. Val302 is a binding site for L-cysteinyl-5'-AMP. The short motif at 308 to 312 is the 'KMSKS' region element; sequence KMSKS.

The protein belongs to the class-I aminoacyl-tRNA synthetase family. MshC subfamily. Monomer. Zn(2+) is required as a cofactor.

It carries out the reaction 1D-myo-inositol 2-amino-2-deoxy-alpha-D-glucopyranoside + L-cysteine + ATP = 1D-myo-inositol 2-(L-cysteinylamino)-2-deoxy-alpha-D-glucopyranoside + AMP + diphosphate + H(+). Functionally, catalyzes the ATP-dependent condensation of GlcN-Ins and L-cysteine to form L-Cys-GlcN-Ins. The sequence is that of L-cysteine:1D-myo-inositol 2-amino-2-deoxy-alpha-D-glucopyranoside ligase from Parafrankia sp. (strain EAN1pec).